The following is a 325-amino-acid chain: MSRCKFRSLNYSEFLNLVEKSDFEEVVTREHEKIMAQKVDGTFNESMKLENRKLNRYLDMLCFDHTRVTLPAEKNRGDYINANYVDGYEYKKKFICTQAPLQQTAYDFWRTVWMHHTRIIVMMCKKKENRKQCFAYWNDIEGGDIVFGKFKITTTQIETHLSYIETTLLVTDGTSAIQEVTHFVFTQWPDYGVPNDVMNLLNFILTVKSAQKDVIRQLAQERFKIGDNPPPIVVHCSAGVGRTGAYCLLDSAISEFDACATISIPSTLINIRNQRYYCIFILPQYFFCYRVMERYVNLTVNKVSKKLIANVATALFNKVLHLKDN.

In terms of domain architecture, Tyrosine-protein phosphatase spans Val-27–Tyr-295. Cys-236 acts as the Phosphocysteine intermediate in catalysis.

Belongs to the protein-tyrosine phosphatase family.

It is found in the host cytoplasm. It carries out the reaction O-phospho-L-tyrosyl-[protein] + H2O = L-tyrosyl-[protein] + phosphate. Functionally, suppresses host immune cell adhesion and phagocytosis. Triggers host mitochondrial membrane depolarization and caspase-dependent apoptosis. The protein is Tyrosine phosphatase H2 (H2) of Microplitis demolitor bracovirus (isolate Webb) (MdBV).